Here is a 487-residue protein sequence, read N- to C-terminus: Protein Optix (487 aa).

Residues 154–214 constitute a DNA-binding region (homeobox); that stretch reads WDGEQKTHCF…KNRRQRDRAA (61 aa). Disordered stretches follow at residues 182–330 and 443–463; these read NPTK…GAGP and ASVGGGGGNQHHEPTTTGYHH. The segment covering 255 to 277 has biased composition (polar residues); that stretch reads GTHSPVPSSLQLQHSPGSTSNGA. Residues 278–293 are compositionally biased toward basic and acidic residues; that stretch reads NDREESLSVDDDKPRD. Positions 294–312 are enriched in low complexity; sequence LSGSLPLPLSLPLPLASPT. Gly residues predominate over residues 321-330; that stretch reads GYGGGAGAGP.

It belongs to the SIX/Sine oculis homeobox family. Expressed during early development of the head. First expressed in a band around the anterior end of stage 5 blastoderm embryo, at 93% to 85% egg length. By gastrula stage, site of expression shifts to the dorsal-anterior region. At stage 12, expression is found in the clypeolabrum, the stomodaeum, and in ectoderm dorsal to the future supraesophageal ganglion.

It is found in the nucleus. In terms of biological role, may be involved in head or eye development; development of the clypeolabrum and several head sensory organs. This chain is Protein Optix (Optix), found in Drosophila melanogaster (Fruit fly).